The chain runs to 408 residues: Na(+)-translocating NADH-quinone reductase subunit F (408 aa).

The chain crosses the membrane as a helical span at residues 4-24 (IYLGVGMFIAIVLALVLIIMF). A 2Fe-2S ferredoxin-type domain is found at 33–127 (GEVTISINGD…DMDIELPEEI (95 aa)). Positions 70, 76, 79, and 111 each coordinate [2Fe-2S] cluster. One can recognise an FAD-binding FR-type domain in the interval 130–270 (IKKWDCEVIS…SGPFGEFFAK (141 aa)).

This sequence belongs to the NqrF family. As to quaternary structure, composed of six subunits; NqrA, NqrB, NqrC, NqrD, NqrE and NqrF. [2Fe-2S] cluster is required as a cofactor. FAD serves as cofactor.

It is found in the cell inner membrane. It catalyses the reaction a ubiquinone + n Na(+)(in) + NADH + H(+) = a ubiquinol + n Na(+)(out) + NAD(+). Functionally, NQR complex catalyzes the reduction of ubiquinone-1 to ubiquinol by two successive reactions, coupled with the transport of Na(+) ions from the cytoplasm to the periplasm. The first step is catalyzed by NqrF, which accepts electrons from NADH and reduces ubiquinone-1 to ubisemiquinone by a one-electron transfer pathway. The sequence is that of Na(+)-translocating NADH-quinone reductase subunit F from Pseudoalteromonas atlantica (strain T6c / ATCC BAA-1087).